The primary structure comprises 455 residues: Bifunctional protein GlmU (455 aa).

The pyrophosphorylase stretch occupies residues 1-229 (MYNCAILLAA…FEETMGVNSR (229 aa)). UDP-N-acetyl-alpha-D-glucosamine contacts are provided by residues 8–11 (LAAG), Lys22, Gln73, and 78–79 (GT). Residue Asp103 participates in Mg(2+) binding. Residues Gly140, Glu155, Asn170, and Asn227 each contribute to the UDP-N-acetyl-alpha-D-glucosamine site. A Mg(2+)-binding site is contributed by Asn227. Residues 230–250 (LQLAEVEAIMRKRINAMHLEN) form a linker region. The interval 251–455 (GVTIIDPNNT…EDWVKKKDEK (205 aa)) is N-acetyltransferase. UDP-N-acetyl-alpha-D-glucosamine-binding residues include Arg332 and Lys350. His362 (proton acceptor) is an active-site residue. Residues Tyr365 and Asn376 each coordinate UDP-N-acetyl-alpha-D-glucosamine. Acetyl-CoA-binding positions include 385-386 (NY), Ala422, and Arg439.

In the N-terminal section; belongs to the N-acetylglucosamine-1-phosphate uridyltransferase family. It in the C-terminal section; belongs to the transferase hexapeptide repeat family. Homotrimer. Mg(2+) serves as cofactor.

Its subcellular location is the cytoplasm. The catalysed reaction is alpha-D-glucosamine 1-phosphate + acetyl-CoA = N-acetyl-alpha-D-glucosamine 1-phosphate + CoA + H(+). The enzyme catalyses N-acetyl-alpha-D-glucosamine 1-phosphate + UTP + H(+) = UDP-N-acetyl-alpha-D-glucosamine + diphosphate. Its pathway is nucleotide-sugar biosynthesis; UDP-N-acetyl-alpha-D-glucosamine biosynthesis; N-acetyl-alpha-D-glucosamine 1-phosphate from alpha-D-glucosamine 6-phosphate (route II): step 2/2. It participates in nucleotide-sugar biosynthesis; UDP-N-acetyl-alpha-D-glucosamine biosynthesis; UDP-N-acetyl-alpha-D-glucosamine from N-acetyl-alpha-D-glucosamine 1-phosphate: step 1/1. It functions in the pathway bacterial outer membrane biogenesis; LPS lipid A biosynthesis. Catalyzes the last two sequential reactions in the de novo biosynthetic pathway for UDP-N-acetylglucosamine (UDP-GlcNAc). The C-terminal domain catalyzes the transfer of acetyl group from acetyl coenzyme A to glucosamine-1-phosphate (GlcN-1-P) to produce N-acetylglucosamine-1-phosphate (GlcNAc-1-P), which is converted into UDP-GlcNAc by the transfer of uridine 5-monophosphate (from uridine 5-triphosphate), a reaction catalyzed by the N-terminal domain. The chain is Bifunctional protein GlmU from Clostridium tetani (strain Massachusetts / E88).